A 465-amino-acid polypeptide reads, in one-letter code: Mitochondrial-processing peptidase subunit beta (465 aa).

Histidine 79 lines the Zn(2+) pocket. Glutamate 82 (proton acceptor) is an active-site residue. The Zn(2+) site is built by histidine 83 and glutamate 159.

It belongs to the peptidase M16 family. Heterodimer of an alpha subunit and a beta subunit subunits, forming the mitochondrial processing protease (MPP) in which the alpha subunit is involved in substrate recognition and binding and the beta subunit is the catalytic subunit. Zn(2+) serves as cofactor.

It localises to the mitochondrion matrix. The enzyme catalyses Release of N-terminal transit peptides from precursor proteins imported into the mitochondrion, typically with Arg in position P2.. With respect to regulation, binding to the alpha subunit is required for catalytic activity. In terms of biological role, catalytic subunit of the essential mitochondrial processing protease (MPP), which cleaves the mitochondrial sequence off newly imported precursors proteins. Preferentially, cleaves after an arginine at position P2. The polypeptide is Mitochondrial-processing peptidase subunit beta (MPP1) (Blastocladiella emersonii (Aquatic fungus)).